The following is a 536-amino-acid chain: Sensory rhodopsin I transducer (536 aa).

The Cytoplasmic segment spans residues 2–14 (TIAWARRRYGVKL). Residues 15 to 29 (GLGYIATAGLLVGVG) form a helical membrane-spanning segment. The Extracellular portion of the chain corresponds to 30–39 (VTTNDVPSTI). Residues 40–55 (VAGIAGLLTLGSINAA) form a helical membrane-spanning segment. Residues 55-107 (AETVASIKEIAAQTERVANGNLEQEVTSTRTDEFGSLADSIEQMRQSLRGRLN) enclose the HAMP 1 domain. The Cytoplasmic segment spans residues 56–536 (ETVASIKEIA…MRAGADGGGA (481 aa)). Residues 116 to 145 (LEETQAEAETAREEAEQAKQEAQAAEREAR) are disordered. Residues 124–145 (ETAREEAEQAKQEAQAAEREAR) show a composition bias toward basic and acidic residues. In terms of domain architecture, HAMP 2 spans 149–202 (ATYQDTAKRYGETMEAAATGDLTQRVDVDTDHEAMETVGTAFNQMMDDLQATVR). The Methyl-accepting transducer domain maps to 221-459 (TSADIEASAG…STATSVERVA (239 aa)). Glu-266 carries the post-translational modification Glutamate methyl ester (Glu). Residues 278-307 (SEDVATASDAARDSSKSALDEMSSIETEVD) form a disordered region. The span at 287–296 (AARDSSKSAL) shows a compositional bias: basic and acidic residues. Position 473 is a glutamate methyl ester (Glu) (Glu-473). The disordered stretch occupies residues 512–536 (TEDSETAGGSVEQPVMRAGADGGGA).

Belongs to the methyl-accepting chemotaxis (MCP) protein family. In terms of processing, methylated by CheR.

The protein resides in the cell membrane. In terms of biological role, transduces signals from the phototaxis receptor sensory rhodopsin I (SR-I) to the flagellar motor. Responds to light changes through the variation of the level of methylation. The chain is Sensory rhodopsin I transducer (htr1) from Halobacterium salinarum (strain ATCC 29341 / DSM 671 / R1).